Reading from the N-terminus, the 192-residue chain is Recombination protein RecR (192 aa).

The segment at 51-66 adopts a C4-type zinc-finger fold; it reads CQTCFHLSADPECEIC. Residues 74-168 enclose the Toprim domain; it reads GLICVVADSR…PVSRIAYGLP (95 aa).

The protein belongs to the RecR family.

Functionally, may play a role in DNA repair. It seems to be involved in an RecBC-independent recombinational process of DNA repair. It may act with RecF and RecO. This chain is Recombination protein RecR, found in Parasynechococcus marenigrum (strain WH8102).